A 364-amino-acid chain; its full sequence is S-adenosylmethionine:tRNA ribosyltransferase-isomerase (364 aa).

It belongs to the QueA family. Monomer.

It localises to the cytoplasm. It catalyses the reaction 7-aminomethyl-7-carbaguanosine(34) in tRNA + S-adenosyl-L-methionine = epoxyqueuosine(34) in tRNA + adenine + L-methionine + 2 H(+). It participates in tRNA modification; tRNA-queuosine biosynthesis. Transfers and isomerizes the ribose moiety from AdoMet to the 7-aminomethyl group of 7-deazaguanine (preQ1-tRNA) to give epoxyqueuosine (oQ-tRNA). This is S-adenosylmethionine:tRNA ribosyltransferase-isomerase from Lachnoclostridium phytofermentans (strain ATCC 700394 / DSM 18823 / ISDg) (Clostridium phytofermentans).